A 294-amino-acid chain; its full sequence is NAD kinase (294 aa).

Asp74 serves as the catalytic Proton acceptor. Residues 74–75, 148–149, His159, Arg176, Asp178, 189–194, and Gln249 each bind NAD(+); these read DG, NE, and TAYSLS.

It belongs to the NAD kinase family. The cofactor is a divalent metal cation.

Its subcellular location is the cytoplasm. The enzyme catalyses NAD(+) + ATP = ADP + NADP(+) + H(+). Involved in the regulation of the intracellular balance of NAD and NADP, and is a key enzyme in the biosynthesis of NADP. Catalyzes specifically the phosphorylation on 2'-hydroxyl of the adenosine moiety of NAD to yield NADP. This Vibrio campbellii (strain ATCC BAA-1116) protein is NAD kinase.